A 218-amino-acid chain; its full sequence is MDKSESTSAGRNRRRRPRRGSRSASSSADANFRVLSQQLSRLNKTLAAGRPTINHPTFVGSERCRPGYTFTSITLRPPKIDRGSYYGKRLLLPDSVTEYDKKLVSRVQIRVNPLPKFDSTVWVTVRKVLASSDLSVAAISAMFADGASPVLVYQYAASGVQTNNKLLCDLSAMRADIGDMRKYAILVYSKDDALETDELVLHVDIEHQRIPTSRVLPV.

M1 carries the N-acetylmethionine; by host modification. The segment covering 1 to 10 has biased composition (low complexity); the sequence is MDKSESTSAG. The interval 1–30 is disordered; the sequence is MDKSESTSAGRNRRRRPRRGSRSASSSADA. A compositionally biased stretch (basic residues) spans 11–21; that stretch reads RNRRRRPRRGS.

The protein belongs to the cucumovirus capsid protein family.

It localises to the virion. Its function is as follows. Capsid protein. Probably binds RNA and plays a role in packaging. The polypeptide is Capsid protein (Cucumis sativus (Cucumber)).